The following is a 201-amino-acid chain: Small ribosomal subunit protein uS4c (201 aa).

Residues 91-153 form the S4 RNA-binding domain; it reads MRLDNIVFRL…NASKKIVETN (63 aa).

Belongs to the universal ribosomal protein uS4 family. As to quaternary structure, part of the 30S ribosomal subunit. Contacts protein S5. The interaction surface between S4 and S5 is involved in control of translational fidelity.

Its subcellular location is the plastid. The protein localises to the cyanelle. Its function is as follows. One of the primary rRNA binding proteins, it binds directly to 16S rRNA where it nucleates assembly of the body of the 30S subunit. With S5 and S12 plays an important role in translational accuracy. In Cyanophora paradoxa, this protein is Small ribosomal subunit protein uS4c (rps4).